The following is a 950-amino-acid chain: Glycine dehydrogenase (decarboxylating) 1 (950 aa).

Lys704 bears the N6-(pyridoxal phosphate)lysine mark.

It belongs to the GcvP family. The glycine cleavage system is composed of four proteins: P, T, L and H. It depends on pyridoxal 5'-phosphate as a cofactor.

The enzyme catalyses N(6)-[(R)-lipoyl]-L-lysyl-[glycine-cleavage complex H protein] + glycine + H(+) = N(6)-[(R)-S(8)-aminomethyldihydrolipoyl]-L-lysyl-[glycine-cleavage complex H protein] + CO2. Functionally, the glycine cleavage system catalyzes the degradation of glycine. The P protein binds the alpha-amino group of glycine through its pyridoxal phosphate cofactor; CO(2) is released and the remaining methylamine moiety is then transferred to the lipoamide cofactor of the H protein. The polypeptide is Glycine dehydrogenase (decarboxylating) 1 (Pseudomonas fluorescens (strain Pf0-1)).